Here is a 206-residue protein sequence, read N- to C-terminus: Protein-methionine-sulfoxide reductase heme-binding subunit MsrQ (206 aa).

4 helical membrane-spanning segments follow: residues 8-28 (IVWL…WLVW), 82-102 (LWCF…ELGI), 116-136 (PYLT…LTST), and 153-173 (FVYL…KILS).

Belongs to the MsrQ family. As to quaternary structure, heterodimer of a catalytic subunit (MsrP) and a heme-binding subunit (MsrQ). Requires FMN as cofactor. Heme b is required as a cofactor.

The protein localises to the cell inner membrane. In terms of biological role, part of the MsrPQ system that repairs oxidized periplasmic proteins containing methionine sulfoxide residues (Met-O), using respiratory chain electrons. Thus protects these proteins from oxidative-stress damage caused by reactive species of oxygen and chlorine generated by the host defense mechanisms. MsrPQ is essential for the maintenance of envelope integrity under bleach stress, rescuing a wide series of structurally unrelated periplasmic proteins from methionine oxidation. MsrQ provides electrons for reduction to the reductase catalytic subunit MsrP, using the quinone pool of the respiratory chain. This Citrobacter koseri (strain ATCC BAA-895 / CDC 4225-83 / SGSC4696) protein is Protein-methionine-sulfoxide reductase heme-binding subunit MsrQ.